A 467-amino-acid chain; its full sequence is A-type ATP synthase subunit B (467 aa).

A disordered region spans residues Gly-95–Val-114.

The protein belongs to the ATPase alpha/beta chains family. Has multiple subunits with at least A(3), B(3), C, D, E, F, H, I and proteolipid K(x).

It is found in the cell membrane. In terms of biological role, component of the A-type ATP synthase that produces ATP from ADP in the presence of a proton gradient across the membrane. The B chain is a regulatory subunit. The sequence is that of A-type ATP synthase subunit B from Pyrobaculum islandicum (strain DSM 4184 / JCM 9189 / GEO3).